The chain runs to 355 residues: UDP-3-O-acylglucosamine N-acyltransferase (355 aa).

Residue histidine 246 is the Proton acceptor of the active site.

The protein belongs to the transferase hexapeptide repeat family. LpxD subfamily. As to quaternary structure, homotrimer.

It catalyses the reaction a UDP-3-O-[(3R)-3-hydroxyacyl]-alpha-D-glucosamine + a (3R)-hydroxyacyl-[ACP] = a UDP-2-N,3-O-bis[(3R)-3-hydroxyacyl]-alpha-D-glucosamine + holo-[ACP] + H(+). It functions in the pathway bacterial outer membrane biogenesis; LPS lipid A biosynthesis. In terms of biological role, catalyzes the N-acylation of UDP-3-O-acylglucosamine using 3-hydroxyacyl-ACP as the acyl donor. Is involved in the biosynthesis of lipid A, a phosphorylated glycolipid that anchors the lipopolysaccharide to the outer membrane of the cell. This is UDP-3-O-acylglucosamine N-acyltransferase from Polaromonas naphthalenivorans (strain CJ2).